Reading from the N-terminus, the 199-residue chain is DNA repair RAD52-like protein 2, chloroplastic (199 aa).

The transit peptide at 1–40 (MALQVQQTSAAFTISSPSTAAARIKLSPFRTVAVNRGVRC) directs the protein to the chloroplast. An N-acetylserine modification is found at Ser-41.

This sequence belongs to the RAD52 family. Expressed in roots and shoots. Expressed at low levels in cauline leaves, flower buds, flowers and siliques.

It localises to the plastid. Its subcellular location is the chloroplast. In terms of biological role, involved in double-stranded DNA break repair. This chain is DNA repair RAD52-like protein 2, chloroplastic, found in Arabidopsis thaliana (Mouse-ear cress).